Reading from the N-terminus, the 327-residue chain is GMP reductase (327 aa).

C176 acts as the Thioimidate intermediate in catalysis. Position 205–228 (205–228 (IIADGGIRTHGDIAKSIRFGASMV)) interacts with NADP(+).

It belongs to the IMPDH/GMPR family. GuaC type 2 subfamily.

It catalyses the reaction IMP + NH4(+) + NADP(+) = GMP + NADPH + 2 H(+). Catalyzes the irreversible NADPH-dependent deamination of GMP to IMP. It functions in the conversion of nucleobase, nucleoside and nucleotide derivatives of G to A nucleotides, and in maintaining the intracellular balance of A and G nucleotides. The polypeptide is GMP reductase (Streptococcus agalactiae serotype V (strain ATCC BAA-611 / 2603 V/R)).